The following is a 509-amino-acid chain: Maturase K (509 aa).

It belongs to the intron maturase 2 family. MatK subfamily.

The protein resides in the plastid. The protein localises to the chloroplast. Usually encoded in the trnK tRNA gene intron. Probably assists in splicing its own and other chloroplast group II introns. The chain is Maturase K from Jacaranda mimosifolia (Jacaranda).